The sequence spans 650 residues: Acetyl-coenzyme A synthetase (650 aa).

CoA-binding positions include 191–194, Thr311, and Asn335; that span reads RGGR. ATP contacts are provided by residues 387–389, 411–416, Asp500, and Arg515; these read GEP and DTWWQT. Ser523 is a CoA binding site. Arg526 is a binding site for ATP. Mg(2+)-binding residues include Val537, His539, and Val542. Arg584 is a CoA binding site. Lys609 bears the N6-acetyllysine mark.

The protein belongs to the ATP-dependent AMP-binding enzyme family. The cofactor is Mg(2+). Acetylated. Deacetylation by the SIR2-homolog deacetylase activates the enzyme.

It catalyses the reaction acetate + ATP + CoA = acetyl-CoA + AMP + diphosphate. Catalyzes the conversion of acetate into acetyl-CoA (AcCoA), an essential intermediate at the junction of anabolic and catabolic pathways. AcsA undergoes a two-step reaction. In the first half reaction, AcsA combines acetate with ATP to form acetyl-adenylate (AcAMP) intermediate. In the second half reaction, it can then transfer the acetyl group from AcAMP to the sulfhydryl group of CoA, forming the product AcCoA. This is Acetyl-coenzyme A synthetase from Shewanella frigidimarina (strain NCIMB 400).